The chain runs to 1188 residues: Integrin alpha-11 (1188 aa).

The N-terminal stretch at 1 to 22 (MDFPRGLLVAWTLSLWPGFTDT) is a signal peptide. Residues 23-1141 (FNMDTRNPRV…ISKQEDWQVP (1119 aa)) lie on the Extracellular side of the membrane. FG-GAP repeat units lie at residues 24-85 (NMDT…NCTK) and 91-151 (VTLS…FSKT). A disulfide bridge links cysteine 76 with cysteine 83. N-linked (GlcNAc...) asparagine glycans are attached at residues asparagine 82 and asparagine 95. Intrachain disulfides connect cysteine 121–cysteine 139 and cysteine 129–cysteine 159. In terms of domain architecture, VWFA spans 164–345 (DIVIVLDGSN…AALKDIVDAL (182 aa)). N-linked (GlcNAc...) asparagine glycans are attached at residues asparagine 291, asparagine 331, asparagine 358, asparagine 449, and asparagine 462. FG-GAP repeat units follow at residues 355-406 (TNKN…VIPH), 411-461 (LKEF…SMHN), 462-527 (NRSL…RFVY), 528-586 (NGTL…NILK), and 590-650 (QRIT…FEPS). Residues aspartate 488, asparagine 490, aspartate 492, and aspartate 496 each coordinate Ca(2+). A glycan (N-linked (GlcNAc...) asparagine) is linked at asparagine 528. Residues aspartate 551, asparagine 553, aspartate 555, aspartate 559, aspartate 613, asparagine 615, aspartate 617, and aspartate 621 each contribute to the Ca(2+) site. The N-linked (GlcNAc...) asparagine glycan is linked to asparagine 642. Disulfide bonds link cysteine 659–cysteine 668, cysteine 674–cysteine 729, and cysteine 781–cysteine 787. Asparagine 694 carries N-linked (GlcNAc...) asparagine glycosylation. Asparagine 857 carries an N-linked (GlcNAc...) asparagine glycan. A disulfide bridge links cysteine 881 with cysteine 893. Asparagine 894, asparagine 973, asparagine 1031, asparagine 1039, and asparagine 1059 each carry an N-linked (GlcNAc...) asparagine glycan. The helical transmembrane segment at 1142–1164 (IWIIVGSTLGGLLLLALLVLALW) threads the bilayer. The Cytoplasmic segment spans residues 1165 to 1188 (KLGFFKSAKRKREPGLGPIPKELK).

This sequence belongs to the integrin alpha chain family. In terms of assembly, heterodimer of an alpha and a beta subunit. Alpha-11 associates with beta-1. Interacts with RAB21.

It localises to the membrane. Integrin alpha-11/beta-1 is a receptor for collagen. The chain is Integrin alpha-11 (Itga11) from Mus musculus (Mouse).